We begin with the raw amino-acid sequence, 422 residues long: Serine protease HTRA2, mitochondrial (422 aa).

The transit peptide at 1–17 (MALRGCHRLEVIFKRCI) directs the protein to the mitochondrion. Residues 18-74 (ASPVLHSQAGNRRSSQLAIKGVDPNSNGNSGQYQQNGEHKEKGWRRLVRFFVPFSLG) constitute a propeptide that is removed on maturation. The disordered stretch occupies residues 33–55 (QLAIKGVDPNSNGNSGQYQQNGE). A compositionally biased stretch (low complexity) spans 42–53 (NSNGNSGQYQQN). The chain crosses the membrane as a helical span at residues 64–82 (LVRFFVPFSLGAAVSAAII). Short sequence motifs (IAP-binding) lie at residues 75-78 (AAVS) and 94-97 (SKMT). Positions 139 to 302 (SNGSGFIIEQ…IPIDYVKVFL (164 aa)) are serine protease. Residues His157, Asp189, and Ser266 each act as charge relay system in the active site. The PDZ domain maps to 325–410 (MGITMLTLTP…TLDIVILRGV (86 aa)).

The protein belongs to the peptidase S1C family. Interacts with th/DIAP1 (via BIR 2 domain).

The protein resides in the mitochondrion intermembrane space. It localises to the mitochondrion membrane. It catalyses the reaction Cleavage of non-polar aliphatic amino-acids at the P1 position, with a preference for Val, Ile and Met. At the P2 and P3 positions, Arg is selected most strongly with a secondary preference for other hydrophilic residues.. Serine protease that shows proteolytic activity against a non-specific substrate beta-casein. Promotes or induces cell death either by direct binding to and inhibition of BIRC proteins (also called inhibitor of apoptosis proteins, IAPs), leading to an increase in caspase activity, or by a BIRC inhibition-independent, caspase-independent and serine protease activity-dependent mechanism. Can antagonize antiapoptotic activity of th/Diap1 by directly inducing the degradation of th/Diap1. This chain is Serine protease HTRA2, mitochondrial, found in Drosophila simulans (Fruit fly).